The primary structure comprises 310 residues: Calbindin-32 (310 aa).

EF-hand domains lie at 35 to 70 (LSANQFMDVWAHYDKDGNGYIEGTELDGFLREFVSS), 84 to 120 (TMLEELKSCFMEAYDDNQDGKIDIRELAQLLPMEENF), 131 to 166 (ESSVEFMKIWREYDTDNSGYIEADELKNFLRDLLKE), 177 to 212 (KLIEYTDTMLQVFDANKDGRLQLSEMAKLLPVKENF), 224 to 259 (LTKEDIEKVFSLYDRDNSGTIENEELKGFLKDLLEL), and 283 to 304 (TDKHGKISRKELTMILLTLAKI). Ca(2+) is bound by residues Asp-48, Asp-50, Asn-52, Tyr-54, Glu-59, Asp-98, Asn-100, Asp-102, Lys-104, Glu-109, Asp-144, Asp-146, Ser-148, Tyr-150, Glu-155, Asp-190, Asn-192, Asp-194, Arg-196, Glu-201, Asp-237, Asp-239, Ser-241, Thr-243, and Glu-248.

This sequence belongs to the calbindin family. In terms of tissue distribution, expressed in a large number of neuron of the brain and the thoracic ganglion as well as in two small muscles of the thorax.

In Drosophila melanogaster (Fruit fly), this protein is Calbindin-32 (Cbp53E).